The chain runs to 217 residues: Thiamine-phosphate synthase (217 aa).

Residues 39–43 and Asn-71 contribute to the 4-amino-2-methyl-5-(diphosphooxymethyl)pyrimidine site; that span reads QLRRK. The Mg(2+) site is built by Asp-72 and Asp-91. Ser-110 contacts 4-amino-2-methyl-5-(diphosphooxymethyl)pyrimidine. Residue 137–139 coordinates 2-[(2R,5Z)-2-carboxy-4-methylthiazol-5(2H)-ylidene]ethyl phosphate; the sequence is SPT. Lys-140 contributes to the 4-amino-2-methyl-5-(diphosphooxymethyl)pyrimidine binding site. 2-[(2R,5Z)-2-carboxy-4-methylthiazol-5(2H)-ylidene]ethyl phosphate-binding positions include Gly-173 and 193 to 194; that span reads IS.

Belongs to the thiamine-phosphate synthase family. Mg(2+) is required as a cofactor.

It catalyses the reaction 2-[(2R,5Z)-2-carboxy-4-methylthiazol-5(2H)-ylidene]ethyl phosphate + 4-amino-2-methyl-5-(diphosphooxymethyl)pyrimidine + 2 H(+) = thiamine phosphate + CO2 + diphosphate. The catalysed reaction is 2-(2-carboxy-4-methylthiazol-5-yl)ethyl phosphate + 4-amino-2-methyl-5-(diphosphooxymethyl)pyrimidine + 2 H(+) = thiamine phosphate + CO2 + diphosphate. It carries out the reaction 4-methyl-5-(2-phosphooxyethyl)-thiazole + 4-amino-2-methyl-5-(diphosphooxymethyl)pyrimidine + H(+) = thiamine phosphate + diphosphate. The protein operates within cofactor biosynthesis; thiamine diphosphate biosynthesis; thiamine phosphate from 4-amino-2-methyl-5-diphosphomethylpyrimidine and 4-methyl-5-(2-phosphoethyl)-thiazole: step 1/1. Functionally, condenses 4-methyl-5-(beta-hydroxyethyl)thiazole monophosphate (THZ-P) and 2-methyl-4-amino-5-hydroxymethyl pyrimidine pyrophosphate (HMP-PP) to form thiamine monophosphate (TMP). The protein is Thiamine-phosphate synthase of Bordetella bronchiseptica (strain ATCC BAA-588 / NCTC 13252 / RB50) (Alcaligenes bronchisepticus).